The primary structure comprises 101 residues: MIYNWGCIIIMKTKMEYKPYSDDRNIISPFLFDVVFLFTKKSFLKENITLIYMDSNSVSIYLPFLSNVLHNMGIISTCKGSKGNFSPSTENKPDSTFGIIL.

This is an uncharacterized protein from Saccharomyces cerevisiae (strain ATCC 204508 / S288c) (Baker's yeast).